A 157-amino-acid polypeptide reads, in one-letter code: Rieske domain-containing protein (157 aa).

Residue Met1 is modified to N-acetylmethionine. Residue Ser6 is modified to Phosphoserine. Rieske domains lie at 16-94 (SSVC…TGEG) and 17-131 (SVCV…NIYV). [2Fe-2S] cluster contacts are provided by Cys57, His59, Cys80, and His83.

Requires [2Fe-2S] cluster as cofactor.

The polypeptide is Rieske domain-containing protein (RFESD) (Homo sapiens (Human)).